Reading from the N-terminus, the 447-residue chain is Elongation factor 1-alpha (447 aa).

Positions 5-230 (KIHISIVVIG…DQISEPKRPS (226 aa)) constitute a tr-type G domain. The tract at residues 14–21 (GHVDSGKS) is G1. 14–21 (GHVDSGKS) contributes to the GTP binding site. At Lys55 the chain carries N6,N6-dimethyllysine. Residues 70 to 74 (GITID) form a G2 region. Lys79 bears the N6,N6,N6-trimethyllysine mark. The G3 stretch occupies residues 91 to 94 (DAPG). GTP is bound by residues 91–95 (DAPGH) and 153–156 (NKMD). The G4 stretch occupies residues 153 to 156 (NKMD). N6,N6,N6-trimethyllysine is present on Lys187. The segment at 194–196 (SGF) is G5. The residue at position 261 (Lys261) is an N6-methyllysine. Glu289 carries the post-translational modification 5-glutamyl glycerylphosphorylethanolamine. Position 306 is an N6,N6,N6-trimethyllysine (Lys306). A 5-glutamyl glycerylphosphorylethanolamine modification is found at Glu362. An N6,N6,N6-trimethyllysine modification is found at Lys396.

Belongs to the TRAFAC class translation factor GTPase superfamily. Classic translation factor GTPase family. EF-Tu/EF-1A subfamily.

It is found in the cytoplasm. Functionally, this protein promotes the GTP-dependent binding of aminoacyl-tRNA to the A-site of ribosomes during protein biosynthesis. The polypeptide is Elongation factor 1-alpha (Daucus carota (Wild carrot)).